Reading from the N-terminus, the 463-residue chain is Dipeptidyl peptidase 1 (463 aa).

Positions 1–24 are cleaved as a signal peptide; sequence MGVGPASLLAALLLLLSGDRAVRC. 3 N-linked (GlcNAc...) asparagine glycosylation sites follow: Asn29, Asn53, and Asn119. 5 cysteine pairs are disulfide-bonded: Cys30/Cys118, Cys54/Cys136, Cys255/Cys298, Cys291/Cys331, and Cys321/Cys337. Positions 135-230 are excised as a propeptide; it reads ACFTGKKVGT…TAEIQQKILH (96 aa). Cys258 is an active-site residue. An N-linked (GlcNAc...) asparagine glycan is attached at Asn276. Residues Phe302 and Tyr304 each contribute to the chloride site. Tyr347 is a binding site for chloride. Active-site residues include His405 and Asn427.

It belongs to the peptidase C1 family. As to quaternary structure, tetramer of heterotrimers consisting of exclusion domain, heavy- and light chains. It depends on chloride as a cofactor.

It localises to the lysosome. It catalyses the reaction Release of an N-terminal dipeptide, Xaa-Yaa-|-Zaa-, except when Xaa is Arg or Lys, or Yaa or Zaa is Pro.. Thiol protease. Has dipeptidylpeptidase activity. Active against a broad range of dipeptide substrates composed of both polar and hydrophobic amino acids. Proline cannot occupy the P1 position and arginine cannot occupy the P2 position of the substrate. Can act as both an exopeptidase and endopeptidase. Activates serine proteases such as elastase, cathepsin G and granzymes A and B. The chain is Dipeptidyl peptidase 1 (CTSC) from Macaca fascicularis (Crab-eating macaque).